Reading from the N-terminus, the 134-residue chain is Putative transposase InsN for insertion sequence element IS911A (134 aa).

It belongs to the transposase 8 family.

In terms of biological role, involved in the transposition of the insertion sequence IS911. This chain is Putative transposase InsN for insertion sequence element IS911A (insN1), found in Escherichia coli (strain K12).